We begin with the raw amino-acid sequence, 296 residues long: Nucleotide-binding protein SUB0630 (296 aa).

13-20 is a binding site for ATP; that stretch reads GMSGAGKT. 63–66 serves as a coordination point for GTP; sequence DMRS.

Belongs to the RapZ-like family.

Displays ATPase and GTPase activities. The protein is Nucleotide-binding protein SUB0630 of Streptococcus uberis (strain ATCC BAA-854 / 0140J).